A 278-amino-acid chain; its full sequence is Large ribosomal subunit protein uL2 (278 aa).

Disordered regions lie at residues 32–57 (ALTEGKNKTGGRNNKGHRTSRGIGGG) and 221–278 (RGVA…KKKR). Positions 269–278 (IRSRHAKKKR) are enriched in basic residues.

Belongs to the universal ribosomal protein uL2 family. Part of the 50S ribosomal subunit. Forms a bridge to the 30S subunit in the 70S ribosome.

Functionally, one of the primary rRNA binding proteins. Required for association of the 30S and 50S subunits to form the 70S ribosome, for tRNA binding and peptide bond formation. It has been suggested to have peptidyltransferase activity; this is somewhat controversial. Makes several contacts with the 16S rRNA in the 70S ribosome. The polypeptide is Large ribosomal subunit protein uL2 (Zymomonas mobilis subsp. mobilis (strain ATCC 31821 / ZM4 / CP4)).